Reading from the N-terminus, the 214-residue chain is Thymidylate kinase (214 aa).

9-16 (GIEGCGKT) is an ATP binding site.

This sequence belongs to the thymidylate kinase family.

The catalysed reaction is dTMP + ATP = dTDP + ADP. Phosphorylation of dTMP to form dTDP in both de novo and salvage pathways of dTTP synthesis. The protein is Thymidylate kinase of Geotalea daltonii (strain DSM 22248 / JCM 15807 / FRC-32) (Geobacter daltonii).